The chain runs to 378 residues: Alginate lyase (378 aa).

Residues 1–28 (MQTPKLIRPTLLSMAILSSMAWATGASA) form the signal peptide. Substrate is bound by residues 67–68 (SK), 140–141 (HT), and Tyr-258. The tract at residues 359–378 (LTKVYDPSHEKGDKGDNDGS) is disordered. A compositionally biased stretch (basic and acidic residues) spans 364–378 (DPSHEKGDKGDNDGS).

This sequence belongs to the polysaccharide lyase 5 family.

Its subcellular location is the periplasm. The enzyme catalyses Eliminative cleavage of alginate to give oligosaccharides with 4-deoxy-alpha-L-erythro-hex-4-enuronosyl groups at their non-reducing ends and beta-D-mannuronate at their reducing end.. Catalyzes the depolymerization of alginate by cleaving the beta-1,4 glycosidic bond between two adjacent sugar residues via a beta-elimination mechanism. May serve to degrade mislocalized alginate that is trapped in the periplasmic space. This is Alginate lyase from Pseudomonas syringae pv. syringae (strain B728a).